Consider the following 811-residue polypeptide: Endothelin-converting enzyme 2 (811 aa).

The Cytoplasmic portion of the chain corresponds to 1–106; the sequence is MNVALQELGA…QLLGSRTQLE (106 aa). Residues 22–64 are disordered; that stretch reads LRDEDAPETPVEGGASPDAMEVGKGASPFSPGPSPGMTPGTPR. The helical; Signal-anchor for type II membrane protein transmembrane segment at 107–127 threads the bilayer; the sequence is LVLAGASLLLAALLLGCLVAL. Residues 128 to 811 lie on the Lumenal side of the membrane; it reads GVQYHRDPSH…MNPGQLCEVW (684 aa). Residues 139–811 enclose the Peptidase M13 domain; the sequence is TCLTEACIRV…MNPGQLCEVW (673 aa). 5 cysteine pairs are disulfide-bonded: Cys140-Cys145, Cys163-Cys796, Cys171-Cys756, Cys227-Cys476, and Cys685-Cys808. N-linked (GlcNAc...) asparagine glycosylation is found at Asn207, Asn211, Asn252, Asn312, Asn357, Asn424, and Asn580. His648 serves as a coordination point for Zn(2+). The active site involves Glu649. Zn(2+) is bound at residue His652. Asn673 and Asn681 each carry an N-linked (GlcNAc...) asparagine glycan. Residue Glu708 participates in Zn(2+) binding. Catalysis depends on Asp712, which acts as the Proton donor.

Belongs to the peptidase M13 family. The cofactor is Zn(2+).

It localises to the golgi apparatus membrane. The protein localises to the cytoplasmic vesicle. Its subcellular location is the secretory vesicle membrane. The catalysed reaction is Hydrolysis of the 21-Trp-|-Val-22 bond in big endothelin to form endothelin 1.. Its function is as follows. Converts big endothelin-1 to endothelin-1. Also involved in the processing of various neuroendocrine peptides, including neurotensin, angiotensin I, substance P, proenkephalin-derived peptides, and prodynorphin-derived peptides. May play a role in amyloid-beta processing. This is Endothelin-converting enzyme 2 from Homo sapiens (Human).